The following is a 1442-amino-acid chain: DNA-binding protein RFX7 (1442 aa).

The segment at 1–36 (MEEEQQQQQQQQQAQKMQGTEQSAQLPPSAPGALPA) is disordered. A DNA-binding region (RFX-type winged-helix) is located at residues 112 to 187 (AFSWIRNTLE…YCYSGLRKKA (76 aa)). The short motif at 192–197 (PSLPNL) is the PxLPxI/L motif element. Disordered regions lie at residues 406–426 (MQSVKPKTPQNIPASPVGDRS), 485–514 (SAGTTVKQTSNNSTSATDETRTGPQIKNGS), and 929–1001 (SVTP…SVPP). The segment covering 935–947 (TPTPTPTPTPTLT) has biased composition (pro residues). Over residues 957 to 995 (GTQSLSRESPCSRLAQTTPVDSALGSSRHTPVGTPHSNC) the composition is skewed to polar residues.

It belongs to the RFX family.

The protein localises to the nucleus. Its function is as follows. Transcription factor. Acts as a transcriptional activator by binding to promoter regions of target genes. Plays a role in natural killer (NK) cell maintenance and immunity. Plays a role in the process of ciliogenesis in the neural tube and neural tube closure by regulating the expression of RFX4. This is DNA-binding protein RFX7 from Xenopus laevis (African clawed frog).